A 212-amino-acid chain; its full sequence is uncharacterized protein (212 aa).

The active-site Acyl-thioester intermediate is the cysteine 52. Catalysis depends on residues histidine 89 and aspartate 104.

It belongs to the arylamine N-acetyltransferase family.

This is an uncharacterized protein from Acanthamoeba polyphaga (Amoeba).